Reading from the N-terminus, the 377-residue chain is Protein RecA (377 aa).

Residues 1-13 (MSNEGKPLQSTES) show a composition bias toward polar residues. Residues 1-20 (MSNEGKPLQSTESTKIDAKS) form a disordered region. Position 82 to 89 (82 to 89 (GPESSGKT)) interacts with ATP. Residues 346–377 (GSEVSANSMRPLASAARQASSRPKLSQVSANG) are disordered. A compositionally biased stretch (polar residues) spans 362–377 (RQASSRPKLSQVSANG).

This sequence belongs to the RecA family.

It localises to the cytoplasm. Functionally, can catalyze the hydrolysis of ATP in the presence of single-stranded DNA, the ATP-dependent uptake of single-stranded DNA by duplex DNA, and the ATP-dependent hybridization of homologous single-stranded DNAs. It interacts with LexA causing its activation and leading to its autocatalytic cleavage. The polypeptide is Protein RecA (Prochlorococcus marinus (strain NATL1A)).